We begin with the raw amino-acid sequence, 340 residues long: Coproporphyrin III ferrochelatase (340 aa).

Fe-coproporphyrin III is bound by residues Ser52 and Tyr121. His181 and Glu264 together coordinate Fe(2+).

This sequence belongs to the ferrochelatase family.

It localises to the cytoplasm. It carries out the reaction Fe-coproporphyrin III + 2 H(+) = coproporphyrin III + Fe(2+). The protein operates within porphyrin-containing compound metabolism; protoheme biosynthesis. Its function is as follows. Involved in coproporphyrin-dependent heme b biosynthesis. Catalyzes the insertion of ferrous iron into coproporphyrin III to form Fe-coproporphyrin III. The polypeptide is Coproporphyrin III ferrochelatase (Mycolicibacterium smegmatis (strain ATCC 700084 / mc(2)155) (Mycobacterium smegmatis)).